Reading from the N-terminus, the 425-residue chain is Serine--tRNA ligase (425 aa).

235-237 is a binding site for L-serine; sequence TAE. ATP is bound at residue 266-268; the sequence is RSE. Residue Glu289 coordinates L-serine. 353–356 provides a ligand contact to ATP; that stretch reads EISS. Ser389 contacts L-serine.

This sequence belongs to the class-II aminoacyl-tRNA synthetase family. Type-1 seryl-tRNA synthetase subfamily. In terms of assembly, homodimer. The tRNA molecule binds across the dimer.

Its subcellular location is the cytoplasm. It catalyses the reaction tRNA(Ser) + L-serine + ATP = L-seryl-tRNA(Ser) + AMP + diphosphate + H(+). The enzyme catalyses tRNA(Sec) + L-serine + ATP = L-seryl-tRNA(Sec) + AMP + diphosphate + H(+). It participates in aminoacyl-tRNA biosynthesis; selenocysteinyl-tRNA(Sec) biosynthesis; L-seryl-tRNA(Sec) from L-serine and tRNA(Sec): step 1/1. Its function is as follows. Catalyzes the attachment of serine to tRNA(Ser). Is also able to aminoacylate tRNA(Sec) with serine, to form the misacylated tRNA L-seryl-tRNA(Sec), which will be further converted into selenocysteinyl-tRNA(Sec). The protein is Serine--tRNA ligase of Desulfotalea psychrophila (strain LSv54 / DSM 12343).